The following is a 979-amino-acid chain: Glutamate receptor ionotropic, kainate 5 (979 aa).

A signal peptide spans 1–14; that stretch reads MPAELLLLLIVAFA. The Extracellular segment spans residues 15 to 544; it reads NPSCQVLSSL…YFSFLDPFSP (530 aa). Cystine bridges form between cysteine 36/cysteine 292, cysteine 83/cysteine 334, and cysteine 165/cysteine 170. N-linked (GlcNAc...) asparagine glycosylation is found at asparagine 219, asparagine 271, asparagine 285, asparagine 322, asparagine 372, asparagine 394, asparagine 400, asparagine 407, asparagine 414, and asparagine 478. A helical membrane pass occupies residues 545 to 565; that stretch reads AVWLFMLLAYLAVSCVLFLAA. Topologically, residues 566-622 are cytoplasmic; it reads RLSPYEWYNPHPCLRARPHILENQYTLGNSLWFPVGGFMQQGSEIMPRALSTRCVSG. The helical transmembrane segment at 623–643 threads the bilayer; it reads VWWAFTLIIISSYTANLAAFL. Topologically, residues 644–803 are extracellular; sequence TVQRMEVPVE…HRAKGLGMEN (160 aa). Asparagine 735 carries N-linked (GlcNAc...) asparagine glycosylation. The helical transmembrane segment at 804 to 824 threads the bilayer; that stretch reads IGGIFVVLICGLIIAVFVAVM. At 825 to 979 the chain is on the cytoplasmic side; sequence EFIWSTRRSA…TGPRELTEHE (155 aa). Over residues 856–867 the composition is skewed to basic residues; sequence RKTSRSRRRRRP. 3 disordered regions span residues 856–875, 890–925, and 942–979; these read RKTS…RALL, LYSA…APTP, and RASG…TEHE. Residues 894 to 903 show a composition bias toward gly residues; the sequence is GAGGDAGAHG. Residues 912-923 show a composition bias toward pro residues; it reads PGPPGGPRPQAP.

This sequence belongs to the glutamate-gated ion channel (TC 1.A.10.1) family. GRIK5 subfamily. As to quaternary structure, homotetramer. Heterotetramer with GRIK2. Can form functional heteromeric receptors with GRIK1, GRIK2 and GRIK3. Forms a heteromeric complex with GRIK2. In terms of tissue distribution, expressed in the hippocampal mossy fiber synapses (at protein level).

Its subcellular location is the cell membrane. It is found in the postsynaptic cell membrane. The protein resides in the presynaptic cell membrane. Its function is as follows. Ionotropic glutamate receptor that functions as a cation-permeable ligand-gated ion channel, gated by L-glutamate and the glutamatergic agonist kainic acid. Cannot form functional channels on its own and produces channel activity only in heteromeric assembly with GRIK2 subunit. Can form functional heteromeric receptors with GRIK1 and GRIK3. The protein is Glutamate receptor ionotropic, kainate 5 (Grik5) of Mus musculus (Mouse).